Here is a 473-residue protein sequence, read N- to C-terminus: Keratin, type I cuticular Ha6 (473 aa).

Residues 1–93 (MATQICTPTF…FCEGAFNGNE (93 aa)) are head. The IF rod domain occupies 93-404 (EKATMQILND…RLLDGEDCKL (312 aa)). Positions 94 to 128 (KATMQILNDRLANYLEKVRQLEQENTQLECRIREW) are coil 1A. The segment at 129 to 139 (YECQIPYICPD) is linker 1. The segment at 140 to 240 (YQSYFKTAEE…HEEEVNALRS (101 aa)) is coil 1B. The linker 12 stretch occupies residues 241–256 (QLGDRLNVEVDAAPPV). Residues 257 to 400 (DLNKILDDMR…ATYRRLLDGE (144 aa)) form a coil 2 region. The interval 401–473 (DCKLPAHPCS…SREHVVPRAM (73 aa)) is tail.

It belongs to the intermediate filament family. Heterotetramer of two type I and two type II keratins. As to expression, in skin, only expressed in the suprabasal cells of tail scale epidermis. Suprabasally expressed in stratified squamous epithelia and also in the posterior unit of the complex filiform papillae of tongue. Expressed in rare anatomical sites in which an orthokeratinized stratum corneum would be too soft and a hard keratinized structure would be too rigid to meet the functional requirement of the respective epithelia.

The chain is Keratin, type I cuticular Ha6 from Mus musculus (Mouse).